Here is a 397-residue protein sequence, read N- to C-terminus: Sulfate adenylyltransferase (397 aa).

It belongs to the sulfate adenylyltransferase family.

The catalysed reaction is sulfate + ATP + H(+) = adenosine 5'-phosphosulfate + diphosphate. It participates in sulfur metabolism; hydrogen sulfide biosynthesis; sulfite from sulfate: step 1/3. This chain is Sulfate adenylyltransferase (sat), found in Allochromatium vinosum (strain ATCC 17899 / DSM 180 / NBRC 103801 / NCIMB 10441 / D) (Chromatium vinosum).